The primary structure comprises 204 residues: ATP phosphoribosyltransferase (204 aa).

The protein belongs to the ATP phosphoribosyltransferase family. Short subfamily. In terms of assembly, heteromultimer composed of HisG and HisZ subunits.

It is found in the cytoplasm. It catalyses the reaction 1-(5-phospho-beta-D-ribosyl)-ATP + diphosphate = 5-phospho-alpha-D-ribose 1-diphosphate + ATP. Its pathway is amino-acid biosynthesis; L-histidine biosynthesis; L-histidine from 5-phospho-alpha-D-ribose 1-diphosphate: step 1/9. Its function is as follows. Catalyzes the condensation of ATP and 5-phosphoribose 1-diphosphate to form N'-(5'-phosphoribosyl)-ATP (PR-ATP). Has a crucial role in the pathway because the rate of histidine biosynthesis seems to be controlled primarily by regulation of HisG enzymatic activity. The polypeptide is ATP phosphoribosyltransferase (Leptospira biflexa serovar Patoc (strain Patoc 1 / Ames)).